The chain runs to 217 residues: Adenylate kinase (217 aa).

10-15 (GAGKGT) is an ATP binding site. Residues 30–59 (STGDIFRKNISDKTPLGIEAKEYLDKGQLV) form an NMP region. Residues Thr-31, Arg-36, 57 to 59 (QLV), 85 to 88 (GFPR), and Gln-92 each bind AMP. Residues 126 to 163 (GRRICPSCGASYHVKFNPPKLKDKCDICNNDIIQRKDD) form an LID region. Arg-127 serves as a coordination point for ATP. Cys-130 and Cys-133 together coordinate Zn(2+). ATP is bound at residue 136–137 (SY). Zn(2+) is bound by residues Cys-150 and Cys-153. Arg-160 and Arg-171 together coordinate AMP. Gly-199 is a binding site for ATP.

Belongs to the adenylate kinase family. In terms of assembly, monomer.

It localises to the cytoplasm. It catalyses the reaction AMP + ATP = 2 ADP. The protein operates within purine metabolism; AMP biosynthesis via salvage pathway; AMP from ADP: step 1/1. In terms of biological role, catalyzes the reversible transfer of the terminal phosphate group between ATP and AMP. Plays an important role in cellular energy homeostasis and in adenine nucleotide metabolism. The protein is Adenylate kinase of Clostridium kluyveri (strain NBRC 12016).